A 372-amino-acid chain; its full sequence is Chaperone protein DnaJ (372 aa).

Residues 5-70 (DYYDLLEVGR…EKRAGYDRYG (66 aa)) form the J domain. The CR-type zinc finger occupies 134 to 212 (GIQAPIHYVT…CGGSGRRRDE (79 aa)). Residues cysteine 147, cysteine 150, cysteine 164, cysteine 167, cysteine 186, cysteine 189, cysteine 200, and cysteine 203 each contribute to the Zn(2+) site. 4 CXXCXGXG motif repeats span residues 147–154 (CDTCQGTG), 164–171 (CHTCQGSG), 186–193 (CTTCYGEG), and 200–207 (CKKCGGSG).

Belongs to the DnaJ family. Homodimer. It depends on Zn(2+) as a cofactor.

It localises to the cytoplasm. Participates actively in the response to hyperosmotic and heat shock by preventing the aggregation of stress-denatured proteins and by disaggregating proteins, also in an autonomous, DnaK-independent fashion. Unfolded proteins bind initially to DnaJ; upon interaction with the DnaJ-bound protein, DnaK hydrolyzes its bound ATP, resulting in the formation of a stable complex. GrpE releases ADP from DnaK; ATP binding to DnaK triggers the release of the substrate protein, thus completing the reaction cycle. Several rounds of ATP-dependent interactions between DnaJ, DnaK and GrpE are required for fully efficient folding. Also involved, together with DnaK and GrpE, in the DNA replication of plasmids through activation of initiation proteins. In Wolbachia sp. subsp. Drosophila simulans (strain wRi), this protein is Chaperone protein DnaJ.